A 447-amino-acid polypeptide reads, in one-letter code: Tubulin beta-5 chain (447 aa).

Positions 11, 69, 138, 142, 143, 144, 204, and 226 each coordinate GTP. Glutamate 69 contacts Mg(2+). Residues 421–447 (EYQQYQDATADDEEEDYGDEEEDEVAA) are disordered. Acidic residues predominate over residues 429–447 (TADDEEEDYGDEEEDEVAA).

It belongs to the tubulin family. As to quaternary structure, dimer of alpha and beta chains. A typical microtubule is a hollow water-filled tube with an outer diameter of 25 nm and an inner diameter of 15 nM. Alpha-beta heterodimers associate head-to-tail to form protofilaments running lengthwise along the microtubule wall with the beta-tubulin subunit facing the microtubule plus end conferring a structural polarity. Microtubules usually have 13 protofilaments but different protofilament numbers can be found in some organisms and specialized cells. The cofactor is Mg(2+). In terms of tissue distribution, expressed in roots, leaf sheaths, and suspension cultured cells.

It is found in the cytoplasm. Its subcellular location is the cytoskeleton. Tubulin is the major constituent of microtubules, a cylinder consisting of laterally associated linear protofilaments composed of alpha- and beta-tubulin heterodimers. Microtubules grow by the addition of GTP-tubulin dimers to the microtubule end, where a stabilizing cap forms. Below the cap, tubulin dimers are in GDP-bound state, owing to GTPase activity of alpha-tubulin. This is Tubulin beta-5 chain (TUBB5) from Oryza sativa subsp. japonica (Rice).